The following is a 609-amino-acid chain: Albumin (609 aa).

The N-terminal stretch at 1 to 18 is a signal peptide; the sequence is MKWVTFISLLFLFSSAYS. A propeptide spanning residues 19 to 24 is cleaved from the precursor; the sequence is RGVFRR. Albumin domains lie at 19–210, 211–403, and 404–601; these read RGVF…DELR, DEGK…EFKP, and LVEE…KLVA. A Cu cation-binding site is contributed by His27. The residue at position 29 (Ser29) is a Phosphoserine. Ca(2+) is bound by residues Glu30 and Asp37. Cys77 and Cys86 are disulfide-bonded. Ser82 and Ser89 each carry phosphoserine. His91 contributes to the Zn(2+) binding site. Intrachain disulfides connect Cys99/Cys115, Cys114/Cys125, Cys148/Cys193, Cys192/Cys201, Cys224/Cys270, and Cys269/Cys277. The residue at position 107 (Thr107) is a Phosphothreonine. N6-succinyllysine is present on Lys229. Lys264 contributes to the (4Z,15Z)-bilirubin IXalpha binding site. Glu268 contacts Ca(2+). His271 and Asp273 together coordinate Zn(2+). The Ca(2+) site is built by Asp273, Glu276, Asp279, and Asp283. Cystine bridges form between Cys289/Cys303, Cys302/Cys313, Cys340/Cys385, Cys384/Cys393, Cys416/Cys462, Cys461/Cys472, Cys485/Cys501, and Cys500/Cys511. Ser297 is modified (phosphoserine). Ser443 is subject to Phosphoserine. Thr444 and Thr446 each carry phosphothreonine. Lys460 carries the N6-succinyllysine modification. Ser513 carries the phosphoserine modification. 2 cysteine pairs are disulfide-bonded: Cys538–Cys583 and Cys582–Cys591. The residue at position 543 (Lys543) is an N6-succinyllysine. Lys558 carries the post-translational modification N6-methyllysine. A Phosphothreonine modification is found at Thr570. An N6-succinyllysine modification is found at Lys588.

It belongs to the ALB/AFP/VDB family. As to quaternary structure, interacts with FCGRT; this interaction regulates ALB homeostasis. Interacts with TASOR. In plasma, occurs in a covalently-linked complex with chromophore-bound alpha-1-microglobulin; this interaction does not prevent fatty acid binding to ALB. Phosphorylated by FAM20C in the extracellular medium. In terms of tissue distribution, plasma.

The protein localises to the secreted. Binds water, Ca(2+), Na(+), K(+), fatty acids, hormones, bilirubin and drugs. Its main function is the regulation of the colloidal osmotic pressure of blood. Major zinc transporter in plasma, typically binds about 80% of all plasma zinc. Major calcium and magnesium transporter in plasma, binds approximately 45% of circulating calcium and magnesium in plasma. Potentially has more than two calcium-binding sites and might additionally bind calcium in a non-specific manner. The shared binding site between zinc and calcium at residue Asp-273 suggests a crosstalk between zinc and calcium transport in the blood. The rank order of affinity is zinc &gt; calcium &gt; magnesium. Binds to the bacterial siderophore enterobactin and inhibits enterobactin-mediated iron uptake of E.coli from ferric transferrin, and may thereby limit the utilization of iron and growth of enteric bacteria such as E.coli. Does not prevent iron uptake by the bacterial siderophore aerobactin. In Pongo abelii (Sumatran orangutan), this protein is Albumin (ALB).